The chain runs to 172 residues: DNA-directed RNA polymerase II subunit RPB7 (172 aa).

It belongs to the eukaryotic RPB7/RPC8 RNA polymerase subunit family. Component of the RNA polymerase II (Pol II) complex consisting of 12 subunits. RPB4 and RPB7 form a subcomplex that protrudes from the 10-subunit Pol II core complex.

It localises to the nucleus. Its function is as follows. DNA-dependent RNA polymerase catalyzes the transcription of DNA into RNA using the four ribonucleoside triphosphates as substrates. Component of RNA polymerase II which synthesizes mRNA precursors and many functional non-coding RNAs. Pol II is the central component of the basal RNA polymerase II transcription machinery. It is composed of mobile elements that move relative to each other. RPB7 is part of a subcomplex with RPB4 that binds to a pocket formed by RPB1, RPB2 and RPB6 at the base of the clamp element. The RPB4-RPB7 subcomplex seems to lock the clamp via RPB7 in the closed conformation thus preventing double-stranded DNA to enter the active site cleft. The RPB4-RPB7 subcomplex binds single-stranded DNA and RNA. The chain is DNA-directed RNA polymerase II subunit RPB7 (polr2g) from Danio rerio (Zebrafish).